Consider the following 143-residue polypeptide: Transcriptional regulator MraZ (143 aa).

SpoVT-AbrB domains are found at residues 5-47 (THSP…TTRE) and 76-119 (ANAE…DAGT).

It belongs to the MraZ family. In terms of assembly, forms oligomers.

It is found in the cytoplasm. The protein resides in the nucleoid. This Clavibacter michiganensis subsp. michiganensis (strain NCPPB 382) protein is Transcriptional regulator MraZ.